A 389-amino-acid chain; its full sequence is Putative phosphoserine aminotransferase (389 aa).

R45 is an L-glutamate binding site. Pyridoxal 5'-phosphate contacts are provided by residues 79–80, W114, T169, D191, and Q214; that span reads GT. K215 bears the N6-(pyridoxal phosphate)lysine mark. 265-266 contributes to the pyridoxal 5'-phosphate binding site; the sequence is NT.

Belongs to the class-V pyridoxal-phosphate-dependent aminotransferase family. SerC subfamily. As to quaternary structure, homodimer. Requires pyridoxal 5'-phosphate as cofactor.

It catalyses the reaction O-phospho-L-serine + 2-oxoglutarate = 3-phosphooxypyruvate + L-glutamate. It carries out the reaction 4-(phosphooxy)-L-threonine + 2-oxoglutarate = (R)-3-hydroxy-2-oxo-4-phosphooxybutanoate + L-glutamate. It participates in amino-acid biosynthesis; L-serine biosynthesis; L-serine from 3-phospho-D-glycerate: step 2/3. Its pathway is cofactor biosynthesis; pyridoxine 5'-phosphate biosynthesis; pyridoxine 5'-phosphate from D-erythrose 4-phosphate: step 3/5. In terms of biological role, catalyzes the reversible conversion of 3-phosphohydroxypyruvate to phosphoserine and of 3-hydroxy-2-oxo-4-phosphonooxybutanoate to phosphohydroxythreonine. This is Putative phosphoserine aminotransferase from Schizosaccharomyces pombe (strain 972 / ATCC 24843) (Fission yeast).